We begin with the raw amino-acid sequence, 425 residues long: tRNA(Met) cytidine acetate ligase (425 aa).

ATP is bound by residues Ile-7–His-20, Gly-102, Asn-165, and Arg-190–Ile-191.

Belongs to the TmcAL family.

It localises to the cytoplasm. It catalyses the reaction cytidine(34) in elongator tRNA(Met) + acetate + ATP = N(4)-acetylcytidine(34) in elongator tRNA(Met) + AMP + diphosphate. Functionally, catalyzes the formation of N(4)-acetylcytidine (ac(4)C) at the wobble position of elongator tRNA(Met), using acetate and ATP as substrates. First activates an acetate ion to form acetyladenylate (Ac-AMP) and then transfers the acetyl group to tRNA to form ac(4)C34. The polypeptide is tRNA(Met) cytidine acetate ligase (Thermosipho melanesiensis (strain DSM 12029 / CIP 104789 / BI429)).